The sequence spans 344 residues: Heat-inducible transcription repressor HrcA (344 aa).

The protein belongs to the HrcA family.

Functionally, negative regulator of class I heat shock genes (grpE-dnaK-dnaJ and groELS operons). Prevents heat-shock induction of these operons. The sequence is that of Heat-inducible transcription repressor HrcA from Moorella thermoacetica (strain ATCC 39073 / JCM 9320).